A 347-amino-acid polypeptide reads, in one-letter code: Selenide, water dikinase (347 aa).

The active site involves C17. Residues K20 and 48 to 50 (TRD) contribute to the ATP site. D51 is a Mg(2+) binding site. ATP contacts are provided by residues D68, D91, and 139–141 (GHS). D91 is a Mg(2+) binding site. Mg(2+) is bound at residue D227.

The protein belongs to the selenophosphate synthase 1 family. Class I subfamily. In terms of assembly, homodimer. It depends on Mg(2+) as a cofactor.

It catalyses the reaction hydrogenselenide + ATP + H2O = selenophosphate + AMP + phosphate + 2 H(+). Functionally, synthesizes selenophosphate from selenide and ATP. In Cronobacter sakazakii (strain ATCC BAA-894) (Enterobacter sakazakii), this protein is Selenide, water dikinase.